A 484-amino-acid polypeptide reads, in one-letter code: Glutamyl-tRNA(Gln) amidotransferase subunit A (484 aa).

Catalysis depends on charge relay system residues K76 and S151. S175 serves as the catalytic Acyl-ester intermediate.

Belongs to the amidase family. GatA subfamily. In terms of assembly, heterotrimer of A, B and C subunits.

The catalysed reaction is L-glutamyl-tRNA(Gln) + L-glutamine + ATP + H2O = L-glutaminyl-tRNA(Gln) + L-glutamate + ADP + phosphate + H(+). Allows the formation of correctly charged Gln-tRNA(Gln) through the transamidation of misacylated Glu-tRNA(Gln) in organisms which lack glutaminyl-tRNA synthetase. The reaction takes place in the presence of glutamine and ATP through an activated gamma-phospho-Glu-tRNA(Gln). This is Glutamyl-tRNA(Gln) amidotransferase subunit A from Halorhodospira halophila (strain DSM 244 / SL1) (Ectothiorhodospira halophila (strain DSM 244 / SL1)).